The chain runs to 172 residues: RNA silencing suppressor p19 (172 aa).

Basic and acidic residues-rich tracts occupy residues 1 to 14 (MERAIQGSDVREQA) and 150 to 172 (SEREGNVSRRRPEGTEAFKEESE). 2 disordered regions span residues 1-34 (MERAIQGSDVREQADSECWDGGGGGTTSPFKLPD) and 145-172 (LQPTPSEREGNVSRRRPEGTEAFKEESE).

This sequence belongs to the tombusvirus protein p19 family. In terms of assembly, homodimer.

Viral suppressor of RNA silencing which binds specifically to silencing RNAs (siRNAs). Acts as a molecular caliper to specifically select siRNAs based on the length of the duplex region of the RNA. This chain is RNA silencing suppressor p19, found in Cymbidium ringspot virus (CymRSV).